Reading from the N-terminus, the 306-residue chain is Large ribosomal subunit protein uL2m (306 aa).

The transit peptide at 1-60 directs the protein to the mitochondrion; sequence MALCALTSALRSLSLASAAITARVPTLLPAAQIQSNVLLQLPPALVSPSYRPVHMSADRS.

The protein belongs to the universal ribosomal protein uL2 family. Component of the mitochondrial ribosome large subunit (39S) which comprises a 16S rRNA and about 50 distinct proteins.

The protein resides in the mitochondrion. In Mus musculus (Mouse), this protein is Large ribosomal subunit protein uL2m (Mrpl2).